Consider the following 153-residue polypeptide: Interleukin-4 (153 aa).

The first 24 residues, 1–24, serve as a signal peptide directing secretion; the sequence is MGLTSQLLPPLFFLLACAGNFVHG. 3 disulfide bridges follow: Cys-27–Cys-151, Cys-48–Cys-89, and Cys-70–Cys-123. The N-linked (GlcNAc...) asparagine glycan is linked to Asn-62.

This sequence belongs to the IL-4/IL-13 family.

The protein resides in the secreted. Participates in at least several B-cell activation processes as well as of other cell types. It is a costimulator of DNA-synthesis. It induces the expression of class II MHC molecules on resting B-cells. It enhances both secretion and cell surface expression of IgE and IgG1. It also regulates the expression of the low affinity Fc receptor for IgE (CD23) on both lymphocytes and monocytes. Positively regulates IL31RA expression in macrophages. Stimulates autophagy in dendritic cells by interfering with mTORC1 signaling and through the induction of RUFY4. In Macaca fascicularis (Crab-eating macaque), this protein is Interleukin-4 (IL4).